We begin with the raw amino-acid sequence, 242 residues long: UPF0309 protein Oant_1457 (242 aa).

Residues 30–214 form the SIS domain; sequence AAELITAAAL…AKLVGKGDAP (185 aa).

Belongs to the UPF0309 family.

The sequence is that of UPF0309 protein Oant_1457 from Brucella anthropi (strain ATCC 49188 / DSM 6882 / CCUG 24695 / JCM 21032 / LMG 3331 / NBRC 15819 / NCTC 12168 / Alc 37) (Ochrobactrum anthropi).